The following is a 307-amino-acid chain: Nodulation protein NoeC (307 aa).

A run of 8 helical transmembrane segments spans residues Ala46–Asn66, Ser91–Ile111, Leu117–Gly137, Val140–Ala160, Ile163–Ile183, Ile212–Val232, Ala238–Ile258, and Val279–Met299.

Its subcellular location is the cell membrane. This Azorhizobium caulinodans (strain ATCC 43989 / DSM 5975 / JCM 20966 / LMG 6465 / NBRC 14845 / NCIMB 13405 / ORS 571) protein is Nodulation protein NoeC (noeC).